Reading from the N-terminus, the 417-residue chain is Tol-Pal system protein TolB (417 aa).

The signal sequence occupies residues 1 to 16 (MRYLWLFLIGTIGLFA).

This sequence belongs to the TolB family. The Tol-Pal system is composed of five core proteins: the inner membrane proteins TolA, TolQ and TolR, the periplasmic protein TolB and the outer membrane protein Pal. They form a network linking the inner and outer membranes and the peptidoglycan layer.

It localises to the periplasm. Its function is as follows. Part of the Tol-Pal system, which plays a role in outer membrane invagination during cell division and is important for maintaining outer membrane integrity. This chain is Tol-Pal system protein TolB, found in Helicobacter pylori (strain HPAG1).